The following is a 239-amino-acid chain: UPF0173 metal-dependent hydrolase DVU_3308 (239 aa).

Belongs to the UPF0173 family.

The polypeptide is UPF0173 metal-dependent hydrolase DVU_3308 (Nitratidesulfovibrio vulgaris (strain ATCC 29579 / DSM 644 / CCUG 34227 / NCIMB 8303 / VKM B-1760 / Hildenborough) (Desulfovibrio vulgaris)).